Reading from the N-terminus, the 478-residue chain is Proline--tRNA ligase (478 aa).

It belongs to the class-II aminoacyl-tRNA synthetase family. ProS type 3 subfamily. As to quaternary structure, homodimer.

The protein localises to the cytoplasm. It carries out the reaction tRNA(Pro) + L-proline + ATP = L-prolyl-tRNA(Pro) + AMP + diphosphate. In terms of biological role, catalyzes the attachment of proline to tRNA(Pro) in a two-step reaction: proline is first activated by ATP to form Pro-AMP and then transferred to the acceptor end of tRNA(Pro). This is Proline--tRNA ligase from Clostridium novyi (strain NT).